The primary structure comprises 90 residues: Small ribosomal subunit protein uS15 (90 aa).

It belongs to the universal ribosomal protein uS15 family. Part of the 30S ribosomal subunit. Forms a bridge to the 50S subunit in the 70S ribosome, contacting the 23S rRNA.

In terms of biological role, one of the primary rRNA binding proteins, it binds directly to 16S rRNA where it helps nucleate assembly of the platform of the 30S subunit by binding and bridging several RNA helices of the 16S rRNA. Functionally, forms an intersubunit bridge (bridge B4) with the 23S rRNA of the 50S subunit in the ribosome. This is Small ribosomal subunit protein uS15 from Helicobacter hepaticus (strain ATCC 51449 / 3B1).